Consider the following 199-residue polypeptide: MALNGADVDDFTWEPPTEAETKVLQARRERQDRISRLMGDYLLRGYRMLGDTCADCGTILLQDKQRKIYCVACQELDSDVDKDNPALNAQAALSQAREHQLASSTEPASSSRPPSQPPVPRPEHCEGAAAGLKAAQAPPLPAAPPNTDAVASTQTALLQKLTWASVELGSSTSLETSIQLCGLIRACAEALGSLKQLDH.

A2 is modified (N-acetylalanine). 4 residues coordinate Zn(2+): C53, C56, C70, and C73. A disordered region spans residues 93 to 148 (LSQAREHQLASSTEPASSSRPPSQPPVPRPEHCEGAAAGLKAAQAPPLPAAPPNTD). At S94 the chain carries Phosphoserine. The segment covering 127–137 (GAAAGLKAAQA) has biased composition (low complexity). Residues 173–194 (SLETSIQLCGLIRACAEALGSL) carry the Nuclear export signal motif.

As to quaternary structure, homodimer. Zn(2+) is required as a cofactor. In terms of tissue distribution, expressed in the early postnatal brain.

It is found in the cytoplasm. Its function is as follows. Might play a role in mitosis. Could be a centromere-associated protein. Antigenic molecule. May induce anti-centromere antibodies. This Mus musculus (Mouse) protein is Protein ZNRD2 (Znrd2).